The sequence spans 215 residues: Thiamine-phosphate synthase (215 aa).

4-amino-2-methyl-5-(diphosphooxymethyl)pyrimidine is bound by residues 42 to 46 (QYREK) and aspartate 77. Mg(2+) is bound by residues aspartate 78 and aspartate 97. Serine 116 contacts 4-amino-2-methyl-5-(diphosphooxymethyl)pyrimidine. 143 to 145 (TKS) contacts 2-[(2R,5Z)-2-carboxy-4-methylthiazol-5(2H)-ylidene]ethyl phosphate. Position 146 (lysine 146) interacts with 4-amino-2-methyl-5-(diphosphooxymethyl)pyrimidine. 2-[(2R,5Z)-2-carboxy-4-methylthiazol-5(2H)-ylidene]ethyl phosphate contacts are provided by residues glycine 174 and 194–195 (IS).

This sequence belongs to the thiamine-phosphate synthase family. Mg(2+) serves as cofactor.

The enzyme catalyses 2-[(2R,5Z)-2-carboxy-4-methylthiazol-5(2H)-ylidene]ethyl phosphate + 4-amino-2-methyl-5-(diphosphooxymethyl)pyrimidine + 2 H(+) = thiamine phosphate + CO2 + diphosphate. The catalysed reaction is 2-(2-carboxy-4-methylthiazol-5-yl)ethyl phosphate + 4-amino-2-methyl-5-(diphosphooxymethyl)pyrimidine + 2 H(+) = thiamine phosphate + CO2 + diphosphate. It catalyses the reaction 4-methyl-5-(2-phosphooxyethyl)-thiazole + 4-amino-2-methyl-5-(diphosphooxymethyl)pyrimidine + H(+) = thiamine phosphate + diphosphate. The protein operates within cofactor biosynthesis; thiamine diphosphate biosynthesis; thiamine phosphate from 4-amino-2-methyl-5-diphosphomethylpyrimidine and 4-methyl-5-(2-phosphoethyl)-thiazole: step 1/1. Functionally, condenses 4-methyl-5-(beta-hydroxyethyl)thiazole monophosphate (THZ-P) and 2-methyl-4-amino-5-hydroxymethyl pyrimidine pyrophosphate (HMP-PP) to form thiamine monophosphate (TMP). The sequence is that of Thiamine-phosphate synthase from Limosilactobacillus reuteri (strain DSM 20016) (Lactobacillus reuteri).